Reading from the N-terminus, the 514-residue chain is Na(+)/H(+) antiporter NhaB (514 aa).

Transmembrane regions (helical) follow at residues 23–43 (LALL…PFVA), 63–83 (PLLP…TSAA), 97–117 (LLLM…LFIF), 120–140 (LLLS…AAAF), 144–164 (FLDA…FYGI), 202–222 (LMMH…VGEP), 238–258 (FFLR…LTCM), 303–323 (AVIG…VGLI), 357–377 (LTVF…APII), 391–411 (LFYL…VGTI), 447–467 (ATPN…APLI), and 475–495 (VWMA…CVEF).

Belongs to the NhaB Na(+)/H(+) (TC 2.A.34) antiporter family.

The protein localises to the cell inner membrane. It catalyses the reaction 2 Na(+)(in) + 3 H(+)(out) = 2 Na(+)(out) + 3 H(+)(in). Its function is as follows. Na(+)/H(+) antiporter that extrudes sodium in exchange for external protons. In Salmonella agona (strain SL483), this protein is Na(+)/H(+) antiporter NhaB.